Consider the following 163-residue polypeptide: Cyclic pyranopterin monophosphate synthase (163 aa).

Substrate contacts are provided by residues 76–78 (LCH) and 114–115 (ME). The active site involves Asp129.

It belongs to the MoaC family. As to quaternary structure, homohexamer; trimer of dimers.

The catalysed reaction is (8S)-3',8-cyclo-7,8-dihydroguanosine 5'-triphosphate = cyclic pyranopterin phosphate + diphosphate. The protein operates within cofactor biosynthesis; molybdopterin biosynthesis. Functionally, catalyzes the conversion of (8S)-3',8-cyclo-7,8-dihydroguanosine 5'-triphosphate to cyclic pyranopterin monophosphate (cPMP). The polypeptide is Cyclic pyranopterin monophosphate synthase (Desulfovibrio desulfuricans (strain ATCC 27774 / DSM 6949 / MB)).